We begin with the raw amino-acid sequence, 162 residues long: Endoribonuclease YbeY (162 aa).

The Zn(2+) site is built by His-117, His-121, and His-127.

This sequence belongs to the endoribonuclease YbeY family. The cofactor is Zn(2+).

The protein localises to the cytoplasm. Its function is as follows. Single strand-specific metallo-endoribonuclease involved in late-stage 70S ribosome quality control and in maturation of the 3' terminus of the 16S rRNA. This is Endoribonuclease YbeY from Francisella tularensis subsp. mediasiatica (strain FSC147).